A 468-amino-acid polypeptide reads, in one-letter code: 6-phospho-beta-galactosidase (468 aa).

D-galactose 6-phosphate contacts are provided by Q19, H116, N159, E160, and N297. E160 acts as the Proton donor in catalysis. Catalysis depends on E375, which acts as the Nucleophile. D-galactose 6-phosphate-binding residues include S428, W429, K435, and Y437.

This sequence belongs to the glycosyl hydrolase 1 family.

The enzyme catalyses a 6-phospho-beta-D-galactoside + H2O = D-galactose 6-phosphate + an alcohol. It participates in carbohydrate metabolism; lactose degradation; D-galactose 6-phosphate and beta-D-glucose from lactose 6-phosphate: step 1/1. This Streptococcus agalactiae serotype III (strain NEM316) protein is 6-phospho-beta-galactosidase.